The sequence spans 708 residues: Large T antigen (708 aa).

Methionine 1 carries the post-translational modification N-acetylmethionine; by host. The region spanning 12 to 75 (QLMDLLGLER…VKYAHQPDFG (64 aa)) is the J domain. Positions 63–89 (EDGVKYAHQPDFGGFWDATEIPTYGTD) are binding of LT to the CUL7 complex. The LXCXE motif signature appears at 103 to 107 (LFCSE). A phosphoserine; by host mark is found at serine 106, serine 112, serine 120, and serine 123. Positions 109 to 134 (MPSSDDEATADSQHSTPPKKKRKVED) are disordered. Phosphothreonine; by host is present on threonine 124. A Nuclear localization signal motif is present at residues 125-132 (PPKKKRKV). A DNA-binding region (T-ag OBD) is located at residues 139 to 254 (PSELLSFLSH…EESLPGGLKE (116 aa)). The T-ag D1-type zinc-finger motif lies at 265–357 (TKQVSWKLVT…KRVDSLQLTR (93 aa)). Residues cysteine 302, cysteine 305, histidine 313, and histidine 317 each coordinate Zn(2+). Positions 337–672 (CQQAVDTVLA…IDSQSQGSFQ (336 aa)) are binding to host TP53 protein. Residues 400-560 (KMDSVVYDFL…DYLKHCLERS (161 aa)) enclose the SF3 helicase domain. Residues 418–616 (KKRYWLFKGP…FSLSVYQKMK (199 aa)) are ATPase activity. 426 to 433 (GPIDSGKT) provides a ligand contact to ATP. The tract at residues 627–708 (DWLRNSDDDD…PPTPPPEPET (82 aa)) is C-terminal region. The tract at residues 630–685 (RNSDDDDEDSQENADKNEDGGEKNMEDSGHETGIDSQSQGSFQAPQSSQSVHDHNQ) is disordered. Serine 639 is subject to Phosphoserine; by host. Residues 642 to 662 (NADKNEDGGEKNMEDSGHETG) are compositionally biased toward basic and acidic residues. A compositionally biased stretch (polar residues) spans 663–679 (IDSQSQGSFQAPQSSQS). A phosphoserine; by host mark is found at serine 676, serine 677, and serine 679. Position 697 is an N6-acetyllysine; by host (lysine 697). The segment at 699–708 (PPTPPPEPET) is CPD. At threonine 701 the chain carries Phosphothreonine; by host.

In terms of assembly, isoform large T antigen forms homohexamers in the presence of ATP. Interacts with host HDAC1. Interacts (via LXCXE domain) with host RB1; the interaction induces the aberrant dissociation of RB1-E2F1 complex thereby disrupting RB1's activity. Interacts (via LXCXE domain) with host pRB-related proteins RBL1 and RBL2. Interacts (via C-terminus) with host TOP1 and POLA1 allowing DNA replication. Interacts with host TP53, inhibiting TP53 binding to DNA. Interacts with host preinitiation complex components TBP, TFIIA and TFIID to regulate transcription initiation. LT interacts (via CPD region) with host FBW7gamma isoform (via WD repeats); seems to function as a competitive inhibitor of FBW7gamma function for physiologic substrates. LT interacts with host E3 ubiquitin ligase CUL7; this interaction seems to inhibit CUL7. Component of a SCF(CUL7)-like complex composed of SV40 Lt and host proteins CUL7, SKP1, RBX1, and FBXW8. LT interacts with host BUB1; this interaction induces activation of a DNA damage response and promotes p53 stabilization and phosphorylation. Interacts with host FAM111A and this interaction is required for efficient viral replication and sustained viral gene expression in restrictive cell types. Mg(2+) is required as a cofactor. Post-translationally, phosphorylated on both serine and threonine residues. Phosphorylation on Ser-120 and Ser-123 inhibits viral replication, while phosphorylation on Thr-124 enhances replication by activating the DNA-binding domain. Phosphorylation on Thr-701 is required for binding to host FBW7gamma isoform. Dephosphorylated preferentially by PP2A on Ser-120, Ser-123, Ser-677 and perhaps Ser-679. Small t antigen inhibits the dephosphorylation by the AC form of PP2A. O-Glycosylated near the C-terminal region. In terms of processing, acetylated by CBP in a TP53-dependent manner.

It localises to the host nucleus. The enzyme catalyses Couples ATP hydrolysis with the unwinding of duplex DNA by translocating in the 3'-5' direction.. It carries out the reaction ATP + H2O = ADP + phosphate + H(+). Its activity is regulated as follows. DNA helicase activity is inhibited by ATP-gamma-S. In terms of biological role, isoform large T antigen is a key early protein essential for both driving viral replication and inducing cellular transformation. Plays a role in viral genome replication by driving entry of quiescent cells into the cell cycle and by autoregulating the synthesis of viral early mRNA. Displays highly oncogenic activities by corrupting the host cellular checkpoint mechanisms that guard cell division and the transcription, replication, and repair of DNA. Participates in the modulation of cellular gene expression preceeding viral DNA replication. This step involves binding to host key cell cycle regulators retinoblastoma protein RB1/pRb and TP53. Induces the disassembly of host E2F1 transcription factors from RB1, thus promoting transcriptional activation of E2F1-regulated S-phase genes. Inhibits host TP53 binding to DNA, abrogating the ability of TP53 to stimulate gene expression. Plays the role of a TFIID-associated factor (TAF) in transcription initiation for all three RNA polymerases, by stabilizing the TBP-TFIIA complex on promoters. Initiates viral DNA replication and unwinding via interactions with the viral origin of replication. Binds two adjacent sites in the SV40 origin. The replication fork movement is facilitated by Large T antigen helicase activity. Has processive 3'-5' DNA helicase activity which requires a short 3' single-stranded region and ATP; other (d)NTPs can partially replace ATP. Activates the transcription of viral late mRNA, through host TBP and TFIIA stabilization. Interferes with histone deacetylation mediated by HDAC1, leading to activation of transcription. May inactivate the growth-suppressing properties of the E3 ubiquitin ligase CUL7. Its function is as follows. Isoform 17kT antigen targets host RBL2 for degradation and promotes cell proliferation. Transactivates host cyclin A promoter through its J domain. Functionally, unwinds G4 DNA (planar arrays of 4 guanine bases stabilized by hydrogen bonds, parallel and antiparallel arrays were tested); unwinding occurs in the 3'-5' direction, requires a 3' single-stranded end and hydrolyzable ATP. The sequence is that of Large T antigen from Macaca (macaques).